We begin with the raw amino-acid sequence, 91 residues long: DNA-directed RNA polymerase subunit omega (91 aa).

The disordered stretch occupies residues 66–91 (QMPPPLPNFPGAANREATGAEDAAGE).

Belongs to the RNA polymerase subunit omega family. As to quaternary structure, the RNAP catalytic core consists of 2 alpha, 1 beta, 1 beta' and 1 omega subunit. When a sigma factor is associated with the core the holoenzyme is formed, which can initiate transcription.

It catalyses the reaction RNA(n) + a ribonucleoside 5'-triphosphate = RNA(n+1) + diphosphate. In terms of biological role, promotes RNA polymerase assembly. Latches the N- and C-terminal regions of the beta' subunit thereby facilitating its interaction with the beta and alpha subunits. The protein is DNA-directed RNA polymerase subunit omega of Acidithiobacillus ferrooxidans (strain ATCC 23270 / DSM 14882 / CIP 104768 / NCIMB 8455) (Ferrobacillus ferrooxidans (strain ATCC 23270)).